Here is a 458-residue protein sequence, read N- to C-terminus: Flap endonuclease 1 (458 aa).

The tract at residues 1–105 (MGIKGLTGLL…GVLSKRFEKR (105 aa)) is N-domain. Asp34 is a Mg(2+) binding site. The DNA site is built by Arg47 and Arg71. The Mg(2+) site is built by Asp87, Glu159, Glu161, Asp180, and Asp182. An I-domain region spans residues 123-254 (DVDRFSRRTV…KSALKLIREF (132 aa)). Glu159 is a binding site for DNA. 2 residues coordinate DNA: Gly232 and Asp234. Asp234 contacts Mg(2+). Disordered stretches follow at residues 268–347 (AAAR…IPDE) and 416–458 (GFFT…AKKK). Acidic residues-rich tracts occupy residues 275–285 (AEEEDEEEAEE) and 293–309 (EMPD…DEEE). Positions 310–329 (AERRKKAEAAKKKKAQEKAK) are enriched in basic and acidic residues. An interaction with PCNA region spans residues 410-418 (QQGRLDGFF). Positions 442–452 (RKGEDKAEGSG) are enriched in basic and acidic residues.

It belongs to the XPG/RAD2 endonuclease family. FEN1 subfamily. As to quaternary structure, interacts with PCNA. Three molecules of FEN1 bind to one PCNA trimer with each molecule binding to one PCNA monomer. PCNA stimulates the nuclease activity without altering cleavage specificity. Mg(2+) serves as cofactor. Phosphorylated. Phosphorylation upon DNA damage induces relocalization to the nuclear plasma.

Its subcellular location is the nucleus. The protein resides in the nucleolus. The protein localises to the nucleoplasm. It localises to the mitochondrion. Structure-specific nuclease with 5'-flap endonuclease and 5'-3' exonuclease activities involved in DNA replication and repair. During DNA replication, cleaves the 5'-overhanging flap structure that is generated by displacement synthesis when DNA polymerase encounters the 5'-end of a downstream Okazaki fragment. It enters the flap from the 5'-end and then tracks to cleave the flap base, leaving a nick for ligation. Also involved in the long patch base excision repair (LP-BER) pathway, by cleaving within the apurinic/apyrimidinic (AP) site-terminated flap. Acts as a genome stabilization factor that prevents flaps from equilibrating into structures that lead to duplications and deletions. Also possesses 5'-3' exonuclease activity on nicked or gapped double-stranded DNA, and exhibits RNase H activity. Also involved in replication and repair of rDNA and in repairing mitochondrial DNA. This chain is Flap endonuclease 1, found in Coprinopsis cinerea (strain Okayama-7 / 130 / ATCC MYA-4618 / FGSC 9003) (Inky cap fungus).